The sequence spans 309 residues: Nucleoside kinase (309 aa).

Residues Asp16, Gly42, and Asn46 each coordinate substrate. Gln108 serves as a coordination point for ATP. Substrate-binding positions include 110-112 (SYF) and Gln166. ATP contacts are provided by residues Asn189 and 217 to 223 (KTYGKEG). Substrate is bound at residue Asp249. Asp249 (proton acceptor) is an active-site residue.

It belongs to the carbohydrate kinase PfkB family. As to quaternary structure, homodimer. Mg(2+) serves as cofactor.

Its function is as follows. Catalyzes the phosphorylation of a wide range of nucleosides to yield nucleoside monophosphates, using ATP, ITP or GTP as phosphate donor. This chain is Nucleoside kinase, found in Methanothermobacter thermautotrophicus (strain ATCC 29096 / DSM 1053 / JCM 10044 / NBRC 100330 / Delta H) (Methanobacterium thermoautotrophicum).